A 277-amino-acid chain; its full sequence is NH(3)-dependent NAD(+) synthetase (277 aa).

Residue 36–43 (GLSGGIDS) coordinates ATP. D42 lines the Mg(2+) pocket. R118 serves as a coordination point for deamido-NAD(+). ATP is bound at residue T138. E143 contributes to the Mg(2+) binding site. ATP-binding residues include K167 and S189.

Belongs to the NAD synthetase family. Homodimer.

It catalyses the reaction deamido-NAD(+) + NH4(+) + ATP = AMP + diphosphate + NAD(+) + H(+). The protein operates within cofactor biosynthesis; NAD(+) biosynthesis; NAD(+) from deamido-NAD(+) (ammonia route): step 1/1. Its function is as follows. Catalyzes the ATP-dependent amidation of deamido-NAD to form NAD. Uses ammonia as a nitrogen source. This chain is NH(3)-dependent NAD(+) synthetase, found in Chlorobaculum tepidum (strain ATCC 49652 / DSM 12025 / NBRC 103806 / TLS) (Chlorobium tepidum).